The following is a 1054-amino-acid chain: Bifunctional cytochrome P450/NADPH--P450 reductase 2 (1054 aa).

Residues 1 to 475 (MKQASAIPQP…QADIKAETKP (475 aa)) form a cytochrome P450 region. Cysteine 403 is a binding site for heme. Residues 462–480 (QRKEQADIKAETKPKETKP) are compositionally biased toward basic and acidic residues. The disordered stretch occupies residues 462–482 (QRKEQADIKAETKPKETKPKH). The tract at residues 476–1053 (KETKPKHGTP…RRYVKDVWTG (578 aa)) is NADPH--P450 reductase. The Flavodoxin-like domain maps to 486–625 (LLVLFGSNLG…HRESWENRFW (140 aa)). Residues 492–497 (SNLGTA), 539–542 (SYNG), 573–575 (CGN), and 581–583 (TYQ) each bind FMN. One can recognise an FAD-binding FR-type domain in the interval 663–896 (YGAFEGIVLE…RTPQSGFQMP (234 aa)).

This sequence in the N-terminal section; belongs to the cytochrome P450 family. FAD serves as cofactor. Requires FMN as cofactor. The cofactor is heme b.

It is found in the cytoplasm. The catalysed reaction is an organic molecule + reduced [NADPH--hemoprotein reductase] + O2 = an alcohol + oxidized [NADPH--hemoprotein reductase] + H2O + H(+). It carries out the reaction 2 oxidized [cytochrome P450] + NADPH = 2 reduced [cytochrome P450] + NADP(+) + H(+). In terms of biological role, functions as a fatty acid monooxygenase. Catalyzes hydroxylation of a range of medium to long-chain fatty acids, with a preference for long-chain unsaturated and branched-chain fatty acids over saturated fatty acids. Hydroxylation of myristic acid occurs mainly at the omega-2 and omega-3 positions, in approximately equal proportions. Also displays a NADPH-dependent reductase activity in the C-terminal domain, which allows electron transfer from NADPH to the heme iron of the cytochrome P450 N-terminal domain. This is Bifunctional cytochrome P450/NADPH--P450 reductase 2 from Bacillus subtilis (strain 168).